The sequence spans 323 residues: Dihydrodiol dehydrogenase 3 (323 aa).

NADP(+)-binding positions include 20–24 (GFGTF) and Asp50. The active-site Proton donor is Tyr55. His117 contacts substrate. NADP(+)-binding positions include 166 to 167 (SN), Gln190, 216 to 221 (YGALGS), and 270 to 280 (KSYNKKRIKEN).

Belongs to the aldo/keto reductase family.

It localises to the cytoplasm. The sequence is that of Dihydrodiol dehydrogenase 3 from Bos taurus (Bovine).